A 271-amino-acid chain; its full sequence is Bifunctional protein FolD (271 aa).

NADP(+)-binding positions include 154-156 (GRS), T181, and I222.

This sequence belongs to the tetrahydrofolate dehydrogenase/cyclohydrolase family. In terms of assembly, homodimer.

The enzyme catalyses (6R)-5,10-methylene-5,6,7,8-tetrahydrofolate + NADP(+) = (6R)-5,10-methenyltetrahydrofolate + NADPH. It catalyses the reaction (6R)-5,10-methenyltetrahydrofolate + H2O = (6R)-10-formyltetrahydrofolate + H(+). It functions in the pathway one-carbon metabolism; tetrahydrofolate interconversion. Its function is as follows. Catalyzes the oxidation of 5,10-methylenetetrahydrofolate to 5,10-methenyltetrahydrofolate and then the hydrolysis of 5,10-methenyltetrahydrofolate to 10-formyltetrahydrofolate. The chain is Bifunctional protein FolD from Thermosipho melanesiensis (strain DSM 12029 / CIP 104789 / BI429).